Consider the following 459-residue polypeptide: Putrescine aminotransferase (459 aa).

Pyridoxal 5'-phosphate-binding positions include 150 to 151 (GT) and Gln274. Lys300 is subject to N6-(pyridoxal phosphate)lysine. Thr332 is a binding site for pyridoxal 5'-phosphate.

The protein belongs to the class-III pyridoxal-phosphate-dependent aminotransferase family. Putrescine aminotransferase subfamily. Pyridoxal 5'-phosphate serves as cofactor.

The catalysed reaction is an alkane-alpha,omega-diamine + 2-oxoglutarate = an omega-aminoaldehyde + L-glutamate. It catalyses the reaction putrescine + 2-oxoglutarate = 1-pyrroline + L-glutamate + H2O. It carries out the reaction cadaverine + 2-oxoglutarate = 5-aminopentanal + L-glutamate. The protein operates within amine and polyamine degradation; putrescine degradation; 4-aminobutanal from putrescine (transaminase route): step 1/1. Its function is as follows. Catalyzes the aminotransferase reaction from putrescine to 2-oxoglutarate, leading to glutamate and 4-aminobutanal, which spontaneously cyclizes to form 1-pyrroline. This is the first step in one of two pathways for putrescine degradation, where putrescine is converted into 4-aminobutanoate (gamma-aminobutyrate or GABA) via 4-aminobutanal. Also functions as a cadaverine transaminase in a a L-lysine degradation pathway to succinate that proceeds via cadaverine, glutarate and L-2-hydroxyglutarate. The sequence is that of Putrescine aminotransferase from Escherichia coli (strain ATCC 8739 / DSM 1576 / NBRC 3972 / NCIMB 8545 / WDCM 00012 / Crooks).